The following is a 157-amino-acid chain: N-acetylgalactosamine-specific phosphotransferase enzyme IIB component 2 (157 aa).

The 157-residue stretch at 1–157 folds into the PTS EIIB type-4 domain; that stretch reads MPNIVLSRID…EPAVDLFKLL (157 aa). H15 (pros-phosphohistidine intermediate) is an active-site residue.

It is found in the cytoplasm. The phosphoenolpyruvate-dependent sugar phosphotransferase system (sugar PTS), a major carbohydrate active -transport system, catalyzes the phosphorylation of incoming sugar substrates concomitantly with their translocation across the cell membrane. This system is involved in N-acetylgalactosamine transport. This chain is N-acetylgalactosamine-specific phosphotransferase enzyme IIB component 2 (agaV), found in Escherichia coli (strain K12).